An 857-amino-acid polypeptide reads, in one-letter code: Protein sip-5 (857 aa).

6 disordered regions span residues 1–81 (MGNA…ARRL), 157–231 (GLPI…FKPT), 384–416 (SESS…APNV), 466–517 (FGRR…GNRR), 545–747 (KAEK…PMFN), and 763–857 (HAGK…QVTL). 2 stretches are compositionally biased toward basic and acidic residues: residues 7-16 (KESRGDDSGR) and 36-48 (ESSR…RHDL). Positions 49-61 (TGLLGRAAGGSSS) are enriched in low complexity. Residues 62–81 (HADERHERKETKQEREARRL) are compositionally biased toward basic and acidic residues. Composition is skewed to polar residues over residues 179 to 191 (ASPT…TNHL) and 199 to 208 (SLSTASEHST). Composition is skewed to low complexity over residues 209–230 (SNAG…PFKP), 384–394 (SESSVNSGSLS), and 476–504 (SASA…TANT). Positions 545-572 (KAEKEEQKEAKKREKEREKAEKKAEKAA) are enriched in basic and acidic residues. Low complexity-rich tracts occupy residues 586-604 (SRSG…PGLS) and 621-645 (ASVA…ALAP). A compositionally biased stretch (basic and acidic residues) spans 648-657 (STKDKGKAVD). Residues 688 to 697 (SSASSASSSA) show a composition bias toward low complexity. A compositionally biased stretch (polar residues) spans 698-712 (VESNQGSYVPPSNLQ). Residues 783 to 799 (ETAKSGEGAGEHVEHVL) show a composition bias toward basic and acidic residues. 2 stretches are compositionally biased toward polar residues: residues 800 to 838 (DSQT…STAS) and 845 to 857 (NETT…QVTL).

It belongs to the SIP5 family.

Its subcellular location is the cytoplasm. Functionally, may negatively regulate the snf-1 kinase. This chain is Protein sip-5 (sip-5), found in Neurospora crassa (strain ATCC 24698 / 74-OR23-1A / CBS 708.71 / DSM 1257 / FGSC 987).